A 544-amino-acid polypeptide reads, in one-letter code: CTP synthase (544 aa).

An amidoligase domain region spans residues 1-267 (MAKFVFVTGG…CRQVLDVLSL (267 aa)). S13 is a CTP binding site. Residue S13 coordinates UTP. Residues 14-19 (SIGKGI) and D71 contribute to the ATP site. Mg(2+)-binding residues include D71 and E141. Residues 148-150 (DIE), 188-193 (KTKPTQ), and K224 each bind CTP. UTP is bound by residues 188–193 (KTKPTQ) and K224. Residues 292-534 (KVALVGKYVQ…IQAASQRLPQ (243 aa)) enclose the Glutamine amidotransferase type-1 domain. G354 is a binding site for L-glutamine. C381 serves as the catalytic Nucleophile; for glutamine hydrolysis. L-glutamine contacts are provided by residues 382-385 (LGMQ), E405, and R462. Active-site residues include H507 and E509.

It belongs to the CTP synthase family. In terms of assembly, homotetramer.

The enzyme catalyses UTP + L-glutamine + ATP + H2O = CTP + L-glutamate + ADP + phosphate + 2 H(+). It carries out the reaction L-glutamine + H2O = L-glutamate + NH4(+). It catalyses the reaction UTP + NH4(+) + ATP = CTP + ADP + phosphate + 2 H(+). It participates in pyrimidine metabolism; CTP biosynthesis via de novo pathway; CTP from UDP: step 2/2. With respect to regulation, allosterically activated by GTP, when glutamine is the substrate; GTP has no effect on the reaction when ammonia is the substrate. The allosteric effector GTP functions by stabilizing the protein conformation that binds the tetrahedral intermediate(s) formed during glutamine hydrolysis. Inhibited by the product CTP, via allosteric rather than competitive inhibition. Catalyzes the ATP-dependent amination of UTP to CTP with either L-glutamine or ammonia as the source of nitrogen. Regulates intracellular CTP levels through interactions with the four ribonucleotide triphosphates. The chain is CTP synthase from Synechococcus sp. (strain RCC307).